A 176-amino-acid polypeptide reads, in one-letter code: Ribosome rescue factor SmrB (176 aa).

The Smr domain maps to 98 to 173 (LDLHGLTQKQ…GTAALLLLIE (76 aa)).

It belongs to the SmrB family. As to quaternary structure, associates with collided ribosomes, but not with correctly translating polysomes.

Acts as a ribosome collision sensor. Detects stalled/collided disomes (pairs of ribosomes where the leading ribosome is stalled and a second ribosome has collided with it) and endonucleolytically cleaves mRNA at the 5' boundary of the stalled ribosome. Stalled/collided disomes form a new interface (primarily via the 30S subunits) that binds SmrB. Cleaved mRNA becomes available for tmRNA ligation, leading to ribosomal subunit dissociation and rescue of stalled ribosomes. This Yersinia pseudotuberculosis serotype O:1b (strain IP 31758) protein is Ribosome rescue factor SmrB.